The chain runs to 502 residues: ATP synthase subunit alpha (502 aa).

The interval 115–134 (IDGQGPINTTKTRPVEQKAT) is disordered. Residue 169–176 (GDRQTGKT) coordinates ATP.

It belongs to the ATPase alpha/beta chains family. In terms of assembly, F-type ATPases have 2 components, CF(1) - the catalytic core - and CF(0) - the membrane proton channel. CF(1) has five subunits: alpha(3), beta(3), gamma(1), delta(1), epsilon(1). CF(0) has three main subunits: a(1), b(2) and c(9-12). The alpha and beta chains form an alternating ring which encloses part of the gamma chain. CF(1) is attached to CF(0) by a central stalk formed by the gamma and epsilon chains, while a peripheral stalk is formed by the delta and b chains.

It localises to the cell membrane. The enzyme catalyses ATP + H2O + 4 H(+)(in) = ADP + phosphate + 5 H(+)(out). Its function is as follows. Produces ATP from ADP in the presence of a proton gradient across the membrane. The alpha chain is a regulatory subunit. This is ATP synthase subunit alpha from Staphylococcus haemolyticus (strain JCSC1435).